Reading from the N-terminus, the 283-residue chain is Release factor glutamine methyltransferase (283 aa).

S-adenosyl-L-methionine contacts are provided by D143 and N189. 189-192 (NPPY) lines the substrate pocket.

The protein belongs to the protein N5-glutamine methyltransferase family. PrmC subfamily.

The enzyme catalyses L-glutaminyl-[peptide chain release factor] + S-adenosyl-L-methionine = N(5)-methyl-L-glutaminyl-[peptide chain release factor] + S-adenosyl-L-homocysteine + H(+). Methylates the class 1 translation termination release factors RF1/PrfA and RF2/PrfB on the glutamine residue of the universally conserved GGQ motif. In Clostridium botulinum (strain Hall / ATCC 3502 / NCTC 13319 / Type A), this protein is Release factor glutamine methyltransferase.